Reading from the N-terminus, the 619-residue chain is 1-deoxy-D-xylulose-5-phosphate synthase (619 aa).

Thiamine diphosphate-binding positions include His-80 and 121–123 (GHS). Mg(2+) is bound at residue Asp-152. Residues 153-154 (GA), Asn-181, Tyr-288, and Glu-370 contribute to the thiamine diphosphate site. Asn-181 provides a ligand contact to Mg(2+).

It belongs to the transketolase family. DXPS subfamily. Homodimer. It depends on Mg(2+) as a cofactor. Requires thiamine diphosphate as cofactor.

It carries out the reaction D-glyceraldehyde 3-phosphate + pyruvate + H(+) = 1-deoxy-D-xylulose 5-phosphate + CO2. Its pathway is metabolic intermediate biosynthesis; 1-deoxy-D-xylulose 5-phosphate biosynthesis; 1-deoxy-D-xylulose 5-phosphate from D-glyceraldehyde 3-phosphate and pyruvate: step 1/1. Functionally, catalyzes the acyloin condensation reaction between C atoms 2 and 3 of pyruvate and glyceraldehyde 3-phosphate to yield 1-deoxy-D-xylulose-5-phosphate (DXP). In Yersinia pseudotuberculosis serotype O:3 (strain YPIII), this protein is 1-deoxy-D-xylulose-5-phosphate synthase.